The sequence spans 227 residues: MNVAVILFGGKGERFSKDYPKQFVKFHGKTLMEHTVEKFLENFIHLIIIVVNGEYLEESKKILKKYKRKNIYVILGGKTREFSTLNAVKYLKDLISEDDNVIIHDGARPFVSKEVILRNIDFVNKYGAVVTAVPVENTIAFVENKIVKEIPPRRYLFTLQTPQTFKYSILYKSFRLIKDLEKFTDDSSVVLAAGYNVHVVYGEKTNIKITTKEDLYLIGVEKIEGNI.

This sequence belongs to the IspD/TarI cytidylyltransferase family. IspD subfamily.

It carries out the reaction 2-C-methyl-D-erythritol 4-phosphate + CTP + H(+) = 4-CDP-2-C-methyl-D-erythritol + diphosphate. Its pathway is isoprenoid biosynthesis; isopentenyl diphosphate biosynthesis via DXP pathway; isopentenyl diphosphate from 1-deoxy-D-xylulose 5-phosphate: step 2/6. Catalyzes the formation of 4-diphosphocytidyl-2-C-methyl-D-erythritol from CTP and 2-C-methyl-D-erythritol 4-phosphate (MEP). This chain is 2-C-methyl-D-erythritol 4-phosphate cytidylyltransferase, found in Thermosipho melanesiensis (strain DSM 12029 / CIP 104789 / BI429).